The sequence spans 726 residues: WD repeat and coiled-coil-containing protein (726 aa).

WD repeat units follow at residues 55 to 98 and 154 to 194; these read GQFE…SDKN and KSSG…LNAC. The interval 502–574 is disordered; sequence RSYDGDQSPT…PNFIQPSDVS (73 aa). The span at 506–515 shows a compositional bias: polar residues; the sequence is GDQSPTSSAN. The segment covering 517-533 has biased composition (basic and acidic residues); sequence FDEKRNRLRMESFDTEP. A compositionally biased stretch (polar residues) spans 550 to 574; sequence SGSTSPKSECQNSSPPNFIQPSDVS. Residues 581-609 are a coiled coil; that stretch reads SISRNVERLCCNFAHLQQHLSELTDITRN.

This is WD repeat and coiled-coil-containing protein (wdcp) from Xenopus laevis (African clawed frog).